Consider the following 218-residue polypeptide: Pyridoxine/pyridoxamine 5'-phosphate oxidase (218 aa).

Substrate-binding positions include 14–17 (RREY) and lysine 72. FMN-binding positions include 67 to 72 (RIVLLK), 82 to 83 (YT), arginine 88, lysine 89, and glutamine 111. Residues tyrosine 129, arginine 133, and serine 137 each contribute to the substrate site. FMN contacts are provided by residues 146 to 147 (QS) and tryptophan 191. 197 to 199 (RLH) serves as a coordination point for substrate. Position 201 (arginine 201) interacts with FMN.

The protein belongs to the pyridoxamine 5'-phosphate oxidase family. In terms of assembly, homodimer. It depends on FMN as a cofactor.

The enzyme catalyses pyridoxamine 5'-phosphate + O2 + H2O = pyridoxal 5'-phosphate + H2O2 + NH4(+). It carries out the reaction pyridoxine 5'-phosphate + O2 = pyridoxal 5'-phosphate + H2O2. The protein operates within cofactor metabolism; pyridoxal 5'-phosphate salvage; pyridoxal 5'-phosphate from pyridoxamine 5'-phosphate: step 1/1. It participates in cofactor metabolism; pyridoxal 5'-phosphate salvage; pyridoxal 5'-phosphate from pyridoxine 5'-phosphate: step 1/1. Catalyzes the oxidation of either pyridoxine 5'-phosphate (PNP) or pyridoxamine 5'-phosphate (PMP) into pyridoxal 5'-phosphate (PLP). The sequence is that of Pyridoxine/pyridoxamine 5'-phosphate oxidase from Escherichia coli (strain SMS-3-5 / SECEC).